The primary structure comprises 448 residues: Glutamyl-tRNA reductase (448 aa).

Residues 49 to 52 (TCNR), Ser109, 114 to 116 (ETQ), and Gln120 contribute to the substrate site. Cys50 serves as the catalytic Nucleophile. 189-194 (GAGEMS) provides a ligand contact to NADP(+).

Belongs to the glutamyl-tRNA reductase family. As to quaternary structure, homodimer.

It catalyses the reaction (S)-4-amino-5-oxopentanoate + tRNA(Glu) + NADP(+) = L-glutamyl-tRNA(Glu) + NADPH + H(+). Its pathway is porphyrin-containing compound metabolism; protoporphyrin-IX biosynthesis; 5-aminolevulinate from L-glutamyl-tRNA(Glu): step 1/2. Catalyzes the NADPH-dependent reduction of glutamyl-tRNA(Glu) to glutamate 1-semialdehyde (GSA). This chain is Glutamyl-tRNA reductase, found in Staphylococcus aureus (strain Mu3 / ATCC 700698).